A 199-amino-acid polypeptide reads, in one-letter code: Recombination protein RecR (199 aa).

Residues 57–72 (CRSCRTFTEESHCPIC) form a C4-type zinc finger. One can recognise a Toprim domain in the interval 81–176 (EQICVVETPA…SVSRIAHGVP (96 aa)).

The protein belongs to the RecR family.

In terms of biological role, may play a role in DNA repair. It seems to be involved in an RecBC-independent recombinational process of DNA repair. It may act with RecF and RecO. This is Recombination protein RecR from Shewanella sediminis (strain HAW-EB3).